A 426-amino-acid polypeptide reads, in one-letter code: MRLDKSKEVFDNTKRYIPGGVNSPVRAFKNLSITPPVISKGKGCRIFDIDGNEYIDFVLSWGAMILGHCDPDVVNRMKEVVEDQIAFGAPTEIEYKMAKLVCETAQIDMVRFVNSGTEATMTAVRLAKGYTGKKKIVKFAGCYHGHHDIFLKEAGSAVAELRLKRIDEDIVQNTIVVEYNNLDSVEKAFKENKDEIAAVIIEPVAGNMGVVPAKKEFLQVLREICNLHGSLLIFDEVITGFRLSLKGARALYNVEPDLVTFGKIIGGGLPCGAVGGKKEIMECLAPQGNVFQAGTMSGNPIVMSAGYATIKKLKENPHFYSNLEMLAGKLEKELTQVFSNSNLTFCINRVGSMLTIFFGVEKVENFEMAKMSDLDLFRSFAEYMIKNHIYVPSSQFEAMFLSVAHSENDVEKFVEIAEEFCSSKRK.

The residue at position 263 (K263) is an N6-(pyridoxal phosphate)lysine.

Belongs to the class-III pyridoxal-phosphate-dependent aminotransferase family. HemL subfamily. Homodimer. The cofactor is pyridoxal 5'-phosphate.

It is found in the cytoplasm. The catalysed reaction is (S)-4-amino-5-oxopentanoate = 5-aminolevulinate. Its pathway is porphyrin-containing compound metabolism; protoporphyrin-IX biosynthesis; 5-aminolevulinate from L-glutamyl-tRNA(Glu): step 2/2. This chain is Glutamate-1-semialdehyde 2,1-aminomutase, found in Caldicellulosiruptor bescii (strain ATCC BAA-1888 / DSM 6725 / KCTC 15123 / Z-1320) (Anaerocellum thermophilum).